The sequence spans 532 residues: Putative cysteine ligase BshC (532 aa).

Residues 431–451 adopt a coiled-coil conformation; that stretch reads MAQAKDALAKVDASLVEAAER.

Belongs to the BshC family.

This Koribacter versatilis (strain Ellin345) protein is Putative cysteine ligase BshC.